The primary structure comprises 183 residues: ADP-ribosylation factor-like protein 5 (183 aa).

Residues 27–34 (GLNAAGKT), 70–74 (DLGGQ), and 129–132 (NKQD) contribute to the GTP site.

This sequence belongs to the small GTPase superfamily. Arf family.

Its function is as follows. May bind and exchange GTP and GDP. This chain is ADP-ribosylation factor-like protein 5 (arl5), found in Dictyostelium discoideum (Social amoeba).